The primary structure comprises 307 residues: Small ribosomal subunit biogenesis GTPase RsgA (307 aa).

The CP-type G domain maps to 80 to 237 (KVDLRQAIVS…IVDTPGIKEF (158 aa)). GTP is bound by residues 129–132 (NKID) and 180–188 (GQSGVGKSS). Residues C261, C266, H268, and C274 each coordinate Zn(2+).

It belongs to the TRAFAC class YlqF/YawG GTPase family. RsgA subfamily. In terms of assembly, monomer. Associates with 30S ribosomal subunit, binds 16S rRNA. Zn(2+) is required as a cofactor.

The protein resides in the cytoplasm. In terms of biological role, one of several proteins that assist in the late maturation steps of the functional core of the 30S ribosomal subunit. Helps release RbfA from mature subunits. May play a role in the assembly of ribosomal proteins into the subunit. Circularly permuted GTPase that catalyzes slow GTP hydrolysis, GTPase activity is stimulated by the 30S ribosomal subunit. The chain is Small ribosomal subunit biogenesis GTPase RsgA from Borrelia garinii subsp. bavariensis (strain ATCC BAA-2496 / DSM 23469 / PBi) (Borreliella bavariensis).